The sequence spans 637 residues: 5-hmdU DNA kinase (637 aa).

The disordered stretch occupies residues 249–269; the sequence is AEKGVKRGKKGRKTSPVAKTL.

Belongs to the thymidylate kinase family. 5-hmdU DNA kinase subfamily.

It carries out the reaction 5-hydroxymethyl-dUMP in DNA + ATP = 5-phosphomethyl-dUMP in DNA + ADP + H(+). Its function is as follows. Phosphorylates 5-hydroxymethyluracil (5hmdU) into 5-phosphomethyl-2'-deoxyuridine (5- PmdU) on DNA as a step in the pathway leading to thymidine hypermodifications in the viral genome. The phosphate is added internally to the DNA polymer. As a final result of the pathway of hypermodification, alpha-glutamylthymidine (YdTMP) substitutes for about 20% of the thymidines in the viral DNA, the 80% left are dTMP. These modifications probably prevent degradation of viral genome by the host restriction-modification antiviral defense system. This is 5-hmdU DNA kinase from Bacillus phage SP10 (Bacillus phage SP-10).